The primary structure comprises 301 residues: Probable alpha-L-glutamate ligase (301 aa).

One can recognise an ATP-grasp domain in the interval 104–287 (LQLLSRKGIG…VAGMIFDFIE (184 aa)). Residues Lys141, 178–179 (EF), Asp187, and 211–213 (RSN) contribute to the ATP site. 3 residues coordinate Mg(2+): Asp248, Glu260, and Asn262. Residues Asp248, Glu260, and Asn262 each coordinate Mn(2+).

The protein belongs to the RimK family. Mg(2+) serves as cofactor. Requires Mn(2+) as cofactor.

In Vibrio parahaemolyticus serotype O3:K6 (strain RIMD 2210633), this protein is Probable alpha-L-glutamate ligase.